The sequence spans 64 residues: DNA-directed RNA polymerase subunit omega (64 aa).

It belongs to the RNA polymerase subunit omega family. The RNAP catalytic core consists of 2 alpha, 1 beta, 1 beta' and 1 omega subunit. When a sigma factor is associated with the core the holoenzyme is formed, which can initiate transcription.

The enzyme catalyses RNA(n) + a ribonucleoside 5'-triphosphate = RNA(n+1) + diphosphate. Its function is as follows. Promotes RNA polymerase assembly. Latches the N- and C-terminal regions of the beta' subunit thereby facilitating its interaction with the beta and alpha subunits. The sequence is that of DNA-directed RNA polymerase subunit omega from Oceanobacillus iheyensis (strain DSM 14371 / CIP 107618 / JCM 11309 / KCTC 3954 / HTE831).